Consider the following 315-residue polypeptide: MRIVFMGTPEFAVPSLRSIAAEHNHFELVLVVTGSDKPRRGRNAPSEPSPVKSAALELGFQVYETDDVSSSDFLSVVADSAPDVIVVAAFRILPPEVYGQAKLGAFNLHASLLPAYRGAAPINWAIINGEKESGVTTFFLQKTVDTGNVIMQEKIPVLPDDNASILSVKLSHLGAELVVKTLRSIQAGTVEVQAQDDAFFSRAPKLTRENTRIRWNQPVAVLSDFIRGLAMKPAAWTTVQNRTMKIFRAIPFTEEITSSIEQPGSILVERGRFLVRGSDGWLEVKQLQPEGRKPMEGAEFARGFRPESGTSLLFE.

111–114 (SLLP) is a binding site for (6S)-5,6,7,8-tetrahydrofolate.

Belongs to the Fmt family.

The catalysed reaction is L-methionyl-tRNA(fMet) + (6R)-10-formyltetrahydrofolate = N-formyl-L-methionyl-tRNA(fMet) + (6S)-5,6,7,8-tetrahydrofolate + H(+). Functionally, attaches a formyl group to the free amino group of methionyl-tRNA(fMet). The formyl group appears to play a dual role in the initiator identity of N-formylmethionyl-tRNA by promoting its recognition by IF2 and preventing the misappropriation of this tRNA by the elongation apparatus. This is Methionyl-tRNA formyltransferase from Chlorobium phaeobacteroides (strain DSM 266 / SMG 266 / 2430).